The chain runs to 318 residues: Electron transfer flavoprotein subunit alpha (318 aa).

257–285 (LYIALGISGAIQHRAGMQTSKTIVAVNKD) is a binding site for FAD.

This sequence belongs to the ETF alpha-subunit/FixB family. In terms of assembly, heterodimer of an alpha and a beta subunit. Requires FAD as cofactor.

Its function is as follows. The electron transfer flavoprotein serves as a specific electron acceptor for other dehydrogenases. It transfers the electrons to the main respiratory chain via ETF-ubiquinone oxidoreductase (ETF dehydrogenase). The polypeptide is Electron transfer flavoprotein subunit alpha (etfA) (Mycobacterium leprae (strain TN)).